Reading from the N-terminus, the 493-residue chain is Alpha-amylase-related protein (493 aa).

The first 19 residues, 1–19 (MFKFALALTLCLAGSLSLA), serve as a signal peptide directing secretion. A Pyrrolidone carboxylic acid modification is found at glutamine 20. A disulfide bond links cysteine 47 and cysteine 103. Ca(2+) is bound by residues asparagine 117, glutamine 168, and aspartate 177. The cysteines at positions 156 and 170 are disulfide-linked. Arginine 205 serves as a coordination point for chloride. Aspartate 207 functions as the Nucleophile in the catalytic mechanism. Histidine 211 lines the Ca(2+) pocket. Glutamate 244 functions as the Proton donor in the catalytic mechanism. Residues asparagine 307 and arginine 342 each coordinate chloride. Intrachain disulfides connect cysteine 375–cysteine 381, cysteine 417–cysteine 440, and cysteine 447–cysteine 459.

This sequence belongs to the glycosyl hydrolase 13 family. In terms of assembly, monomer. Ca(2+) serves as cofactor. It depends on chloride as a cofactor.

It is found in the secreted. The enzyme catalyses Endohydrolysis of (1-&gt;4)-alpha-D-glucosidic linkages in polysaccharides containing three or more (1-&gt;4)-alpha-linked D-glucose units.. This Drosophila elegans (Fruit fly) protein is Alpha-amylase-related protein (Amyrel).